The following is a 421-amino-acid chain: UDP-N-acetylglucosamine 1-carboxyvinyltransferase (421 aa).

22–23 (KN) serves as a coordination point for phosphoenolpyruvate. Arginine 91 is a UDP-N-acetyl-alpha-D-glucosamine binding site. Cysteine 115 functions as the Proton donor in the catalytic mechanism. At cysteine 115 the chain carries 2-(S-cysteinyl)pyruvic acid O-phosphothioketal. UDP-N-acetyl-alpha-D-glucosamine contacts are provided by residues 120–124 (RPIDL), aspartate 306, and isoleucine 328.

Belongs to the EPSP synthase family. MurA subfamily.

Its subcellular location is the cytoplasm. The catalysed reaction is phosphoenolpyruvate + UDP-N-acetyl-alpha-D-glucosamine = UDP-N-acetyl-3-O-(1-carboxyvinyl)-alpha-D-glucosamine + phosphate. It participates in cell wall biogenesis; peptidoglycan biosynthesis. Functionally, cell wall formation. Adds enolpyruvyl to UDP-N-acetylglucosamine. In Methylacidiphilum infernorum (isolate V4) (Methylokorus infernorum (strain V4)), this protein is UDP-N-acetylglucosamine 1-carboxyvinyltransferase.